Consider the following 105-residue polypeptide: Large ribosomal subunit protein uL24 (105 aa).

The protein belongs to the universal ribosomal protein uL24 family. In terms of assembly, part of the 50S ribosomal subunit.

Its function is as follows. One of two assembly initiator proteins, it binds directly to the 5'-end of the 23S rRNA, where it nucleates assembly of the 50S subunit. In terms of biological role, one of the proteins that surrounds the polypeptide exit tunnel on the outside of the subunit. This Psychrobacter sp. (strain PRwf-1) protein is Large ribosomal subunit protein uL24.